The sequence spans 164 residues: Phosphopantetheine adenylyltransferase (164 aa).

S9 lines the substrate pocket. Residues 9–10 (SF) and H17 contribute to the ATP site. Substrate is bound by residues K41, L73, and K87. ATP contacts are provided by residues 88-90 (GLR), E98, and 123-129 (YSYLSSS).

This sequence belongs to the bacterial CoaD family. Homohexamer. It depends on Mg(2+) as a cofactor.

The protein localises to the cytoplasm. The enzyme catalyses (R)-4'-phosphopantetheine + ATP + H(+) = 3'-dephospho-CoA + diphosphate. Its pathway is cofactor biosynthesis; coenzyme A biosynthesis; CoA from (R)-pantothenate: step 4/5. In terms of biological role, reversibly transfers an adenylyl group from ATP to 4'-phosphopantetheine, yielding dephospho-CoA (dPCoA) and pyrophosphate. The protein is Phosphopantetheine adenylyltransferase of Clostridium botulinum (strain ATCC 19397 / Type A).